We begin with the raw amino-acid sequence, 62 residues long: Cytotoxin-like basic protein (62 aa).

4 disulfides stabilise this stretch: cysteine 3-cysteine 22, cysteine 15-cysteine 40, cysteine 44-cysteine 55, and cysteine 56-cysteine 61.

This sequence belongs to the three-finger toxin family. Short-chain subfamily. Orphan group XV sub-subfamily. In terms of tissue distribution, expressed by the venom gland.

It is found in the secreted. It localises to the target cell membrane. Functionally, has low cytotoxic activity. The sequence is that of Cytotoxin-like basic protein from Naja naja (Indian cobra).